A 252-amino-acid chain; its full sequence is Transmembrane ascorbate-dependent reductase CYB561 (252 aa).

M1 carries the N-acetylmethionine modification. At 1–17 (MEGPASPARAPGALPYY) the chain is on the cytoplasmic side. A helical membrane pass occupies residues 18–38 (VAFSQLLGLIVVAMTGAWLGM). In terms of domain architecture, Cytochrome b561 spans 20 to 221 (FSQLLGLIVV…FATVILYILT (202 aa)). Residues 39–52 (YRGGIAWESALQFN) lie on the Vesicular side of the membrane. Residues 53–73 (VHPLCMIIGLVFLQGDALLVY) form a helical membrane-spanning segment. H54, R74, and K81 together coordinate heme b. The Cytoplasmic portion of the chain corresponds to 74 to 86 (RVFRNEAKRTTKV). K81 and K85 together coordinate L-ascorbate. A helical membrane pass occupies residues 87–107 (LHGLLHVFAFVIALVGLVAVF). Heme b-binding positions include H88, 117–120 (DLYS), and H122. At 108-125 (EHHRKKGYADLYSLHSWC) the chain is on the vesicular side. Residues 126–146 (GILVFALFFAQWLVGFSFFLF) traverse the membrane as a helical segment. Topologically, residues 147 to 159 (PGASFSLRSRYRP) are cytoplasmic. R154 contributes to the L-ascorbate binding site. Residues 160 to 180 (QHVFFGAAIFLLSVATALLGL) form a helical membrane-spanning segment. The heme b site is built by H161 and E182. The Vesicular portion of the chain corresponds to 181-199 (KEALLFELGTKYSMFEPEG). Residues 200–220 (VLANVLGLLLATFATVILYIL) traverse the membrane as a helical segment. Over 221 to 252 (TRADWKRPLQAEEQALSMDFKTLTEGDSPSSQ) the chain is Cytoplasmic. A heme b-binding site is contributed by K226. S248 and S250 each carry phosphoserine.

The cofactor is heme b. In terms of tissue distribution, expressed in the adrenal medulla and all brain regions, but not in visceral organs.

The protein resides in the cytoplasmic vesicle. Its subcellular location is the secretory vesicle. It is found in the chromaffin granule membrane. It catalyses the reaction monodehydro-L-ascorbate radical(out) + L-ascorbate(in) = monodehydro-L-ascorbate radical(in) + L-ascorbate(out). Transmembrane reductase that uses ascorbate as an electron donor in the cytoplasm and transfers electrons across membranes to reduce monodehydro-L-ascorbate radical in the lumen of secretory vesicles. It is therefore involved the regeneration and homeostasis within secretory vesicles of ascorbate which in turn provides reducing equivalents needed to support the activity of intravesicular enzymes. In Bos taurus (Bovine), this protein is Transmembrane ascorbate-dependent reductase CYB561 (CYB561).